A 327-amino-acid polypeptide reads, in one-letter code: Phospho-N-acetylmuramoyl-pentapeptide-transferase (327 aa).

10 helical membrane passes run 3–23 (IALI…PAFI), 51–71 (TMGG…IGLF), 75–95 (LSNG…VGFL), 115–135 (LFLQ…HGAG), 140–160 (IFTV…FWLI), 172–192 (IDGL…VIAV), 197–217 (FDIL…FVFN), 223–243 (IFMG…ISIS), 248–268 (WTLL…MMQV), and 306–326 (VDFF…AILY).

This sequence belongs to the glycosyltransferase 4 family. MraY subfamily. Mg(2+) serves as cofactor.

It is found in the cell membrane. The enzyme catalyses UDP-N-acetyl-alpha-D-muramoyl-L-alanyl-gamma-D-glutamyl-L-lysyl-D-alanyl-D-alanine + di-trans,octa-cis-undecaprenyl phosphate = Mur2Ac(oyl-L-Ala-gamma-D-Glu-L-Lys-D-Ala-D-Ala)-di-trans,octa-cis-undecaprenyl diphosphate + UMP. It participates in cell wall biogenesis; peptidoglycan biosynthesis. Catalyzes the initial step of the lipid cycle reactions in the biosynthesis of the cell wall peptidoglycan: transfers peptidoglycan precursor phospho-MurNAc-pentapeptide from UDP-MurNAc-pentapeptide onto the lipid carrier undecaprenyl phosphate, yielding undecaprenyl-pyrophosphoryl-MurNAc-pentapeptide, known as lipid I. The polypeptide is Phospho-N-acetylmuramoyl-pentapeptide-transferase (Streptococcus sanguinis (strain SK36)).